A 321-amino-acid chain; its full sequence is Lipoyl synthase (321 aa).

The [4Fe-4S] cluster site is built by cysteine 68, cysteine 73, cysteine 79, cysteine 94, cysteine 98, cysteine 101, and serine 308. The 218-residue stretch at 80 to 297 folds into the Radical SAM core domain; the sequence is FNHGTATFMI…REFAESIGFT (218 aa).

This sequence belongs to the radical SAM superfamily. Lipoyl synthase family. It depends on [4Fe-4S] cluster as a cofactor.

The protein localises to the cytoplasm. The catalysed reaction is [[Fe-S] cluster scaffold protein carrying a second [4Fe-4S](2+) cluster] + N(6)-octanoyl-L-lysyl-[protein] + 2 oxidized [2Fe-2S]-[ferredoxin] + 2 S-adenosyl-L-methionine + 4 H(+) = [[Fe-S] cluster scaffold protein] + N(6)-[(R)-dihydrolipoyl]-L-lysyl-[protein] + 4 Fe(3+) + 2 hydrogen sulfide + 2 5'-deoxyadenosine + 2 L-methionine + 2 reduced [2Fe-2S]-[ferredoxin]. It participates in protein modification; protein lipoylation via endogenous pathway; protein N(6)-(lipoyl)lysine from octanoyl-[acyl-carrier-protein]: step 2/2. Its function is as follows. Catalyzes the radical-mediated insertion of two sulfur atoms into the C-6 and C-8 positions of the octanoyl moiety bound to the lipoyl domains of lipoate-dependent enzymes, thereby converting the octanoylated domains into lipoylated derivatives. The polypeptide is Lipoyl synthase (Shewanella sediminis (strain HAW-EB3)).